Here is a 738-residue protein sequence, read N- to C-terminus: 1,4-alpha-glucan branching enzyme GlgB (738 aa).

Asp417 acts as the Nucleophile in catalysis. The active-site Proton donor is Glu472.

This sequence belongs to the glycosyl hydrolase 13 family. GlgB subfamily. In terms of assembly, monomer.

The enzyme catalyses Transfers a segment of a (1-&gt;4)-alpha-D-glucan chain to a primary hydroxy group in a similar glucan chain.. It participates in glycan biosynthesis; glycogen biosynthesis. Catalyzes the formation of the alpha-1,6-glucosidic linkages in glycogen by scission of a 1,4-alpha-linked oligosaccharide from growing alpha-1,4-glucan chains and the subsequent attachment of the oligosaccharide to the alpha-1,6 position. This Burkholderia pseudomallei (strain 1106a) protein is 1,4-alpha-glucan branching enzyme GlgB.